The following is a 193-amino-acid chain: Xanthine phosphoribosyltransferase (193 aa).

Xanthine-binding residues include L20 and T27. 128-132 (ANGQA) serves as a coordination point for 5-phospho-alpha-D-ribose 1-diphosphate. K156 provides a ligand contact to xanthine.

This sequence belongs to the purine/pyrimidine phosphoribosyltransferase family. Xpt subfamily. Homodimer.

It is found in the cytoplasm. The enzyme catalyses XMP + diphosphate = xanthine + 5-phospho-alpha-D-ribose 1-diphosphate. The protein operates within purine metabolism; XMP biosynthesis via salvage pathway; XMP from xanthine: step 1/1. Converts the preformed base xanthine, a product of nucleic acid breakdown, to xanthosine 5'-monophosphate (XMP), so it can be reused for RNA or DNA synthesis. The protein is Xanthine phosphoribosyltransferase of Streptococcus pyogenes serotype M5 (strain Manfredo).